Here is a 492-residue protein sequence, read N- to C-terminus: uncharacterized protein (492 aa).

Positions 1 to 22 are cleaved as a signal peptide; the sequence is MIRPNMFALLMLVVLAITSVNA. Asn-92, Asn-97, Asn-119, Asn-146, Asn-213, Asn-267, and Asn-458 each carry an N-linked (GlcNAc...) asparagine; by host glycan.

The protein resides in the secreted. This is an uncharacterized protein from Acanthamoeba polyphaga (Amoeba).